Reading from the N-terminus, the 431-residue chain is Light-independent protochlorophyllide reductase subunit N (431 aa).

The [4Fe-4S] cluster site is built by Cys-29, Cys-54, and Cys-114.

The protein belongs to the BchN/ChlN family. As to quaternary structure, protochlorophyllide reductase is composed of three subunits; ChlL, ChlN and ChlB. Forms a heterotetramer of two ChlB and two ChlN subunits. The cofactor is [4Fe-4S] cluster.

Its subcellular location is the plastid. It is found in the chloroplast. The catalysed reaction is chlorophyllide a + oxidized 2[4Fe-4S]-[ferredoxin] + 2 ADP + 2 phosphate = protochlorophyllide a + reduced 2[4Fe-4S]-[ferredoxin] + 2 ATP + 2 H2O. The protein operates within porphyrin-containing compound metabolism; chlorophyll biosynthesis (light-independent). In terms of biological role, component of the dark-operative protochlorophyllide reductase (DPOR) that uses Mg-ATP and reduced ferredoxin to reduce ring D of protochlorophyllide (Pchlide) to form chlorophyllide a (Chlide). This reaction is light-independent. The NB-protein (ChlN-ChlB) is the catalytic component of the complex. In Nephroselmis olivacea (Green alga), this protein is Light-independent protochlorophyllide reductase subunit N.